Here is a 299-residue protein sequence, read N- to C-terminus: Non-structural protein V (299 aa).

Positions 41-99 are disordered; that stretch reads DNPGQERATCREEKAGSSGLSKPCLSAIGSTEGGAPRIRGQGPGESDDDAETLGIPPRN. An interaction with host STAT1 region spans residues 110–120; the sequence is YYVYDHSGEAV. A compositionally biased stretch (low complexity) spans 134–145; the sequence is GLDGDSTLSGGD. Positions 134–162 are disordered; the sequence is GLDGDSTLSGGDNESENSDVDIGEPDTEG. Positions 146–160 are enriched in acidic residues; that stretch reads NESENSDVDIGEPDT. The Zn(2+) site is built by H232, C251, C255, C267, C269, C272, C276, and C279.

This sequence belongs to the paramyxoviruses V protein family. In terms of assembly, interacts with host IFIH1/MDA5 and DHX58/LGP2; these interactions are involved in the inhibition of the host type I interferon signaling pathway. Interacts with host TYK2; this interaction inhibits the type I interferon signaling pathway without affecting the type II pathway. Interacts with host IRF7; this interaction inhibits IRF7 translocation to the nucleus. Interacts with host CHUK. Interacts with host RELA/p65; this interaction inhibits the nuclear translocation of NF-KappaB. Interacts (via N-terminus) with host STAT1 and JAK1; these interactions inhibit STAT1 phosphorylation by Jak1 and thereby the type I interferon signaling pathway. Interacts (via C-terminus) with host STAT2; this interaction is involved in the inhibition of the host type I interferon signaling pathway. Forms a complex with host PPP1CA and PPP1CC; this interaction prevents dephosphorylation of host IFIH1/MDA5 and leads to the inhibition of the host type I interferon signaling pathway. Interacts with host IRF9; this interaction prevents the binding of IRF9 to STAT2 and thereby the type I interferon signaling pathway.

It is found in the host cytoplasm. Its function is as follows. Plays an essential role in the inhibition of host immune response. Prevents the establishment of cellular antiviral state by blocking interferon-alpha/beta (IFN-alpha/beta) production and signaling pathway. Interacts with host IFIH1/MDA5 and DHX58/LGP2 to inhibit the transduction pathway involved in the activation of IFN-beta promoter, thus protecting the virus against cell antiviral state. Blocks the type I interferon signaling pathway by interacting with host TYK2 and thereby inhibiting downstream STAT1 and STAT2 phosphorylation. Moderately affects the type II interferon signaling. This is Non-structural protein V (P/V) from Measles virus (strain Edmonston-Schwarz vaccine) (MeV).